We begin with the raw amino-acid sequence, 205 residues long: CASP-like protein 2A1 (205 aa).

The disordered stretch occupies residues 1–25 (MDKSKVSTAVGGETPVGLITGSRDD). At 1–34 (MDKSKVSTAVGGETPVGLITGSRDDELESGSMRT) the chain is on the cytoplasmic side. The chain crosses the membrane as a helical span at residues 35–55 (AETVLRLVPMAFCISALVLML). Over 56–76 (KNSQTNDFGTLSYSDLGAFRY) the chain is Extracellular. The chain crosses the membrane as a helical span at residues 77–97 (LVHANGICAGYSLLSAIIVAM). Topologically, residues 98–105 (PRPSTMSR) are cytoplasmic. The chain crosses the membrane as a helical span at residues 106–126 (AWTFFFLDQVLTYVILAAAAV). Over 127–156 (SVEALYLARKGDIAITWSAACVSFGGFCHK) the chain is Extracellular. The helical transmembrane segment at 157–177 (AITSAVITFIVVVCYALLSLV) threads the bilayer. Residues 178–205 (SSYKLFSRYGAPDVSYPGKGIEVAAFHS) are Cytoplasmic-facing.

This sequence belongs to the Casparian strip membrane proteins (CASP) family. In terms of assembly, homodimer and heterodimers.

The protein localises to the cell membrane. This is CASP-like protein 2A1 from Ricinus communis (Castor bean).